Consider the following 413-residue polypeptide: Multidrug resistance protein MdtA (413 aa).

A signal peptide spans 1-20 (MKGSNTFRWAIAIGVVVAAA). Disordered stretches follow at residues 31–57 (SPTAAPGVAAQAPHTASAGRRGMRDGP) and 391–413 (EPQTTVADEKSPSRHEGQKGARA). The segment covering 397 to 413 (ADEKSPSRHEGQKGARA) has biased composition (basic and acidic residues).

Belongs to the membrane fusion protein (MFP) (TC 8.A.1) family. As to quaternary structure, part of a tripartite efflux system composed of MdtA, MdtB and MdtC.

The protein resides in the cell inner membrane. In Salmonella typhimurium (strain LT2 / SGSC1412 / ATCC 700720), this protein is Multidrug resistance protein MdtA.